A 363-amino-acid chain; its full sequence is UDP-N-acetylglucosamine--N-acetylmuramyl-(pentapeptide) pyrophosphoryl-undecaprenol N-acetylglucosamine transferase (363 aa).

UDP-N-acetyl-alpha-D-glucosamine is bound by residues 14 to 16, R171, S200, and Q290; that span reads TGG.

Belongs to the glycosyltransferase 28 family. MurG subfamily.

The protein resides in the cell inner membrane. It catalyses the reaction di-trans,octa-cis-undecaprenyl diphospho-N-acetyl-alpha-D-muramoyl-L-alanyl-D-glutamyl-meso-2,6-diaminopimeloyl-D-alanyl-D-alanine + UDP-N-acetyl-alpha-D-glucosamine = di-trans,octa-cis-undecaprenyl diphospho-[N-acetyl-alpha-D-glucosaminyl-(1-&gt;4)]-N-acetyl-alpha-D-muramoyl-L-alanyl-D-glutamyl-meso-2,6-diaminopimeloyl-D-alanyl-D-alanine + UDP + H(+). The protein operates within cell wall biogenesis; peptidoglycan biosynthesis. Cell wall formation. Catalyzes the transfer of a GlcNAc subunit on undecaprenyl-pyrophosphoryl-MurNAc-pentapeptide (lipid intermediate I) to form undecaprenyl-pyrophosphoryl-MurNAc-(pentapeptide)GlcNAc (lipid intermediate II). The chain is UDP-N-acetylglucosamine--N-acetylmuramyl-(pentapeptide) pyrophosphoryl-undecaprenol N-acetylglucosamine transferase from Borreliella afzelii (strain PKo) (Borrelia afzelii).